A 767-amino-acid polypeptide reads, in one-letter code: MTTLNTNDKDLPIVKKYDSLNGTWDFLKTGVSQIFERLDEGMTITKYMELYTAIHNYCADASKTITVDNFNDQTANVLGEALYNNLVLYLEEYLARLRKECISQTNHEEQLAAYAKYWTRFTTSARFINHLFGYLNRYWVKLKNRFTETLVYDIYTLCLVSWHHHVFSHIRDSLLQNLLYMFTKKRLYEPTDMKYVEVCVDSITSLSFDKTDMTKPNLSSYKTFFETNFIENTKNFYAKESSEYLASHSITDYLKKAEIRLAEEEELVRLYLHESTLKPLLEATEDVLIAQHEEVLHNDFARMLDQNCSEDIIRMYRLMSRTPNGLQPLRQTFEEFVKRSGFAAVAKIVPQVGGEADVDPKEYMEMLLSTYKASKELVNTAFHGDTDFTKSLDTAFRELVNRNVVCQRSSSRSPELLAKYADSILRKSNKNVDIDDVEDCLSSIIIIFRYVEDKDVFQNFYTKLLAKRLVNGTSNSQDAESSMLSKLKEVCGFEYTSKLQRMFQDISLSQEITEAFWQLPQSRAGNIDFSALVLGTSFWPLSPNNVNFHLPEELVPLYEGFQNYYYSCHNGRKLSWLFHLSKGEIKARINPQTNVTYVFQVSTYQMGVLLLYNHRDSYTYEELAKITGLSTDFLTGILNIFLKAKVLLLGDNDKLGDPNSTYKINENFRMKKIRVQLNLPIRSEQKQESLETHKTIEEDRKLLLQSAIVRIMKARRTLKHVVLVKETIDQIKSRFTPKVSDIKQCIDMLIEKEYLERQGRDEYIYLA.

Residues 699–760 (DRKLLLQSAI…EKEYLERQGR (62 aa)) form the Cullin neddylation domain. K713 is covalently cross-linked (Glycyl lysine isopeptide (Lys-Gly) (interchain with G-Cter in NEDD8)).

The protein belongs to the cullin family. As to quaternary structure, component of multiple Cul1-RING E3 ubiquitin-protein ligase complexes commonly known as SCF (SKP1-CUL1-F-box) complexes, consisting of cul1, skp1, pip1 and a variable F-box domain-containing protein as substrate-specific subunit. Binds to the pop1 homodimer, the pop2 homodimer and the pop1/pop2 heterodimer forming the SCF(pop1-pop2) complex. Interacts with pof3, pof14 and skp1. Post-translationally, neddylated; enhancing the ubiquitin-ligase activity.

Its subcellular location is the cytoplasm. Its pathway is protein modification; protein ubiquitination. In terms of biological role, core component of multiple cullin-RING-based SCF (SKP1-CUL1-F-box protein) E3 ubiquitin-protein ligase complexes, which mediate the ubiquitination of target proteins. The functional specificity of the SCF complex depends on the F-box protein as substrate recognition component. SCF(pop1-pop2) is required for the maintenance of ploidy and directs ubiquitination of cig2. The sequence is that of Cullin-1 (cul1) from Schizosaccharomyces pombe (strain 972 / ATCC 24843) (Fission yeast).